Consider the following 263-residue polypeptide: Hydroxyethylthiazole kinase (263 aa).

Met-39 serves as a coordination point for substrate. ATP is bound by residues Lys-115 and Thr-160. Gly-187 is a substrate binding site.

This sequence belongs to the Thz kinase family. Mg(2+) serves as cofactor.

The enzyme catalyses 5-(2-hydroxyethyl)-4-methylthiazole + ATP = 4-methyl-5-(2-phosphooxyethyl)-thiazole + ADP + H(+). It participates in cofactor biosynthesis; thiamine diphosphate biosynthesis; 4-methyl-5-(2-phosphoethyl)-thiazole from 5-(2-hydroxyethyl)-4-methylthiazole: step 1/1. Functionally, catalyzes the phosphorylation of the hydroxyl group of 4-methyl-5-beta-hydroxyethylthiazole (THZ). This is Hydroxyethylthiazole kinase from Staphylococcus aureus (strain bovine RF122 / ET3-1).